The primary structure comprises 540 residues: 2-succinyl-5-enolpyruvyl-6-hydroxy-3-cyclohexene-1-carboxylate synthase (540 aa).

It belongs to the TPP enzyme family. MenD subfamily. Homodimer. Requires Mg(2+) as cofactor. It depends on Mn(2+) as a cofactor. Thiamine diphosphate is required as a cofactor.

It catalyses the reaction isochorismate + 2-oxoglutarate + H(+) = 5-enolpyruvoyl-6-hydroxy-2-succinyl-cyclohex-3-ene-1-carboxylate + CO2. The protein operates within quinol/quinone metabolism; 1,4-dihydroxy-2-naphthoate biosynthesis; 1,4-dihydroxy-2-naphthoate from chorismate: step 2/7. It participates in quinol/quinone metabolism; menaquinone biosynthesis. In terms of biological role, catalyzes the thiamine diphosphate-dependent decarboxylation of 2-oxoglutarate and the subsequent addition of the resulting succinic semialdehyde-thiamine pyrophosphate anion to isochorismate to yield 2-succinyl-5-enolpyruvyl-6-hydroxy-3-cyclohexene-1-carboxylate (SEPHCHC). This chain is 2-succinyl-5-enolpyruvyl-6-hydroxy-3-cyclohexene-1-carboxylate synthase, found in Mycobacteroides abscessus (strain ATCC 19977 / DSM 44196 / CCUG 20993 / CIP 104536 / JCM 13569 / NCTC 13031 / TMC 1543 / L948) (Mycobacterium abscessus).